Here is a 191-residue protein sequence, read N- to C-terminus: MTADNSVPSRLRNILVIAAALVLTILVVLGSRQPSAAASLASLAEQATPYEVAIANDRPMLLEFYADWCTSCQAMAGRIAALKQDYSDRLDFVMLNIDNDKWLPEVLDYNVDGIPQFVYLNGQGQPQGISIGELPRSVLAANLDALVEAQPLPYTNARGNLSEFSADLQPSRSSQTDPRSHSGQVQDGVLD.

A helical transmembrane segment spans residues Ile-14–Gly-30. Residues Val-27 to Glu-148 enclose the Thioredoxin domain. The cysteines at positions 69 and 72 are disulfide-linked. A compositionally biased stretch (polar residues) spans Ser-165–Val-185. The disordered stretch occupies residues Ser-165 to Asp-191.

Belongs to the thioredoxin family.

It localises to the cell membrane. Functionally, required for disulfide bond formation in some proteins. Acts by transferring its disulfide bond to other proteins and is reduced in the process. In Synechococcus elongatus (strain ATCC 33912 / PCC 7942 / FACHB-805) (Anacystis nidulans R2), this protein is Thiol:disulfide interchange protein TxlA (txlA).